Consider the following 53-residue polypeptide: uncharacterized protein (53 aa).

Positions 34-53 (RKEKGKRHAAPLSLMGVHKR) are disordered.

This is an uncharacterized protein from Treponema pallidum (strain Nichols).